A 48-amino-acid chain; its full sequence is Sperm protamine R3 isoform 2 (48 aa).

Positions 1–29 (ARRRHSMKKKRKSVRRRKTRKNQRKRKNS) are enriched in basic residues. The tract at residues 1 to 48 (ARRRHSMKKKRKSVRRRKTRKNQRKRKNSLGRSFKAHGFLKQPPRFRP) is disordered.

Testis.

It is found in the nucleus. The protein resides in the chromosome. Functionally, protamines substitute for histones in the chromatin of sperm during the haploid phase of spermatogenesis. They compact sperm DNA into a highly condensed, stable and inactive complex. The chain is Sperm protamine R3 isoform 2 from Hydrolagus colliei (Spotted ratfish).